A 135-amino-acid polypeptide reads, in one-letter code: Large ribosomal subunit protein eL32 (135 aa).

This sequence belongs to the eukaryotic ribosomal protein eL32 family.

In Methanococcus maripaludis (strain C7 / ATCC BAA-1331), this protein is Large ribosomal subunit protein eL32.